The chain runs to 271 residues: 4-hydroxy-tetrahydrodipicolinate reductase (271 aa).

Residue 8-13 (GITGRM) participates in NAD(+) binding. An NADP(+)-binding site is contributed by R35. Residues 100–102 (GST) and 124–127 (APNM) each bind NAD(+). Catalysis depends on H157, which acts as the Proton donor/acceptor. H158 is a (S)-2,3,4,5-tetrahydrodipicolinate binding site. The active-site Proton donor is K161. 167 to 168 (GT) is a binding site for (S)-2,3,4,5-tetrahydrodipicolinate.

Belongs to the DapB family.

The protein resides in the cytoplasm. The catalysed reaction is (S)-2,3,4,5-tetrahydrodipicolinate + NAD(+) + H2O = (2S,4S)-4-hydroxy-2,3,4,5-tetrahydrodipicolinate + NADH + H(+). It catalyses the reaction (S)-2,3,4,5-tetrahydrodipicolinate + NADP(+) + H2O = (2S,4S)-4-hydroxy-2,3,4,5-tetrahydrodipicolinate + NADPH + H(+). It functions in the pathway amino-acid biosynthesis; L-lysine biosynthesis via DAP pathway; (S)-tetrahydrodipicolinate from L-aspartate: step 4/4. In terms of biological role, catalyzes the conversion of 4-hydroxy-tetrahydrodipicolinate (HTPA) to tetrahydrodipicolinate. The polypeptide is 4-hydroxy-tetrahydrodipicolinate reductase (Myxococcus xanthus (strain DK1622)).